Reading from the N-terminus, the 382-residue chain is Succinyl-diaminopimelate desuccinylase (382 aa).

H68 lines the Zn(2+) pocket. D70 is a catalytic residue. D101 serves as a coordination point for Zn(2+). E135 acts as the Proton acceptor in catalysis. E136, E164, and H350 together coordinate Zn(2+).

It belongs to the peptidase M20A family. DapE subfamily. As to quaternary structure, homodimer. The cofactor is Zn(2+). Co(2+) is required as a cofactor.

The enzyme catalyses N-succinyl-(2S,6S)-2,6-diaminopimelate + H2O = (2S,6S)-2,6-diaminopimelate + succinate. The protein operates within amino-acid biosynthesis; L-lysine biosynthesis via DAP pathway; LL-2,6-diaminopimelate from (S)-tetrahydrodipicolinate (succinylase route): step 3/3. Catalyzes the hydrolysis of N-succinyl-L,L-diaminopimelic acid (SDAP), forming succinate and LL-2,6-diaminopimelate (DAP), an intermediate involved in the bacterial biosynthesis of lysine and meso-diaminopimelic acid, an essential component of bacterial cell walls. This is Succinyl-diaminopimelate desuccinylase from Acidithiobacillus ferrooxidans (strain ATCC 23270 / DSM 14882 / CIP 104768 / NCIMB 8455) (Ferrobacillus ferrooxidans (strain ATCC 23270)).